Reading from the N-terminus, the 212-residue chain is 3-demethoxyubiquinol 3-hydroxylase (212 aa).

Residues 1–14 are compositionally biased toward low complexity; it reads MTSPSSRTPRGSTP. A disordered region spans residues 1–22; sequence MTSPSSRTPRGSTPPFEPSADE. The Fe cation site is built by E58, E89, H92, E141, E173, and H176.

The protein belongs to the COQ7 family. Requires Fe cation as cofactor.

The protein localises to the cell membrane. It catalyses the reaction a 5-methoxy-2-methyl-3-(all-trans-polyprenyl)benzene-1,4-diol + AH2 + O2 = a 3-demethylubiquinol + A + H2O. It functions in the pathway cofactor biosynthesis; ubiquinone biosynthesis. In terms of biological role, catalyzes the hydroxylation of 2-nonaprenyl-3-methyl-6-methoxy-1,4-benzoquinol during ubiquinone biosynthesis. This chain is 3-demethoxyubiquinol 3-hydroxylase, found in Rhodospirillum rubrum (strain ATCC 11170 / ATH 1.1.1 / DSM 467 / LMG 4362 / NCIMB 8255 / S1).